The sequence spans 96 residues: UPF0235 protein Tola_0962 (96 aa).

The protein belongs to the UPF0235 family.

The protein is UPF0235 protein Tola_0962 of Tolumonas auensis (strain DSM 9187 / NBRC 110442 / TA 4).